The primary structure comprises 2920 residues: Cadherin-related hmr-1 (2920 aa).

The N-terminal stretch at 1–19 is a signal peptide; sequence MSWNILLILLISNLDEVLA. The Extracellular portion of the chain corresponds to 20–2779; it reads KTLLKLPSNA…AVSKLGISSP (2760 aa). N-linked (GlcNAc...) asparagine glycans are attached at residues Asn-72, Asn-243, Asn-253, Asn-339, and Asn-508. 14 consecutive Cadherin domains span residues 322–422, 425–530, 531–642, 643–747, 749–865, 871–979, 980–1093, 1097–1211, 1212–1335, 1336–1436, 1438–1546, 1548–1661, 1662–1772, and 1772–1874; these read SSRS…PPSF, SPLP…PPQF, AKQE…VPTF, TRPL…SAVF, PTSQ…KPEF, YSDI…SPQF, ERPS…APKW, PDCK…VPQF, TVDL…APSF, EEQK…APQF, QQKY…SPIF, ERLF…APFF, EKTR…APHI, and IHGA…EPYT. 4 N-linked (GlcNAc...) asparagine glycosylation sites follow: Asn-658, Asn-685, Asn-715, and Asn-826. Asn-1177 carries N-linked (GlcNAc...) asparagine glycosylation. Asn-1417 carries an N-linked (GlcNAc...) asparagine glycan. N-linked (GlcNAc...) asparagine glycosylation occurs at Asn-1646. Asn-1935, Asn-2224, and Asn-2232 each carry an N-linked (GlcNAc...) asparagine glycan. Residues 2246–2283 enclose the EGF-like 1 domain; sequence APPACQHSLCHNDGVCHNTNPGFFCECRNDGLKGARCQ. Cystine bridges form between Cys-2250–Cys-2261, Cys-2255–Cys-2270, and Cys-2272–Cys-2282. Positions 2284–2478 constitute a Laminin G-like domain; the sequence is GTTRSFGGNG…AFEQNSEKGC (195 aa). N-linked (GlcNAc...) asparagine glycosylation is found at Asn-2307 and Asn-2332. Intrachain disulfides connect Cys-2452–Cys-2478, Cys-2501–Cys-2515, and Cys-2517–Cys-2526. Residues 2492–2527 form the EGF-like 2 domain; the sequence is SLNHCIHGDCFADVQGSGAMVAKCVCDPGWGGARCE. N-linked (GlcNAc...) asparagine glycosylation is present at Asn-2623. Residues 2780 to 2800 form a helical membrane-spanning segment; that stretch reads AIILILVSLALLILLVMMMVV. Over 2801–2920 the chain is Cytoplasmic; sequence YTRRSPGAFE…VTLESIESAQ (120 aa). A Phosphoserine modification is found at Ser-2839. Positions 2858 to 2891 are disordered; it reads IGGHPPHYPPRGMAPPKDDHELNSKIKDLETDQN. Residues 2873–2887 show a composition bias toward basic and acidic residues; sequence PKDDHELNSKIKDLE. At Ser-2909 the chain carries Phosphoserine. A Phosphothreonine modification is found at Thr-2912. Ser-2915 and Ser-2918 each carry phosphoserine.

In terms of assembly, monomer in solution. Isoform a is a component of a core catenin-cadherin complex consisting of hmr-1, hmp-1 and hmp-2; the complex localizes to adherens junctions. Isoform a interacts with hmp-2; the interaction is direct. Isoform a interacts (via intracellular domain) with jac-1. Post-translationally, phosphorylation at T-2912 increases the binding affinity for hmp-2. In terms of processing, sumoylated. Sumoylation prevents accumulation at adherens junctions and decreases the binding affinity for hmp-2. In terms of tissue distribution, expressed in epidermal cells (at protein level). Neuron-specific.

The protein localises to the cell membrane. It localises to the cell junction. Its subcellular location is the adherens junction. It is found in the cell projection. The protein resides in the dendrite. Cadherins are calcium-dependent cell adhesion proteins. They preferentially interact with themselves in a homophilic manner in connecting cells; cadherins may thus contribute to the sorting of heterogeneous cell types. Required for adherens junction assembly and connecting adherens junctions to the cytoskeleton. Its function is as follows. Isoform a is required for cell migration during body enclosure and cell shape changes during body elongation. Required for proper localization of other junctional components, such as hmp-1, hmp-2, jac-1 and pac-1. Recruitment of pac-1 is required to establish cell polarity, independent of its role in cell adhesion. Required for primodial germ cell ingression and adherence to endodermal cells during gastrulation. In terms of biological role, isoform b is involved in axonal guidance in a subset of motor neurons. The protein is Cadherin-related hmr-1 of Caenorhabditis elegans.